The primary structure comprises 242 residues: Pyridoxine 5'-phosphate synthase (242 aa).

Position 6 (Asn6) interacts with 3-amino-2-oxopropyl phosphate. 8–9 serves as a coordination point for 1-deoxy-D-xylulose 5-phosphate; that stretch reads DH. Residue Arg17 participates in 3-amino-2-oxopropyl phosphate binding. Residue His42 is the Proton acceptor of the active site. Residues Arg44 and His49 each coordinate 1-deoxy-D-xylulose 5-phosphate. Glu69 (proton acceptor) is an active-site residue. Position 99 (Thr99) interacts with 1-deoxy-D-xylulose 5-phosphate. His193 serves as the catalytic Proton donor. 3-amino-2-oxopropyl phosphate is bound by residues Gly194 and 217-218; that span reads GH.

Belongs to the PNP synthase family. Homooctamer; tetramer of dimers.

The protein resides in the cytoplasm. It carries out the reaction 3-amino-2-oxopropyl phosphate + 1-deoxy-D-xylulose 5-phosphate = pyridoxine 5'-phosphate + phosphate + 2 H2O + H(+). The protein operates within cofactor biosynthesis; pyridoxine 5'-phosphate biosynthesis; pyridoxine 5'-phosphate from D-erythrose 4-phosphate: step 5/5. In terms of biological role, catalyzes the complicated ring closure reaction between the two acyclic compounds 1-deoxy-D-xylulose-5-phosphate (DXP) and 3-amino-2-oxopropyl phosphate (1-amino-acetone-3-phosphate or AAP) to form pyridoxine 5'-phosphate (PNP) and inorganic phosphate. This chain is Pyridoxine 5'-phosphate synthase, found in Aquifex aeolicus (strain VF5).